The sequence spans 182 residues: Isopentenyl-diphosphate Delta-isomerase (182 aa).

Residues H25 and H32 each coordinate Mn(2+). Residues 30–164 enclose the Nudix hydrolase domain; sequence LLHLAFSSWL…PWAFSPWMVM (135 aa). C67 is an active-site residue. H69 contacts Mn(2+). A Mg(2+)-binding site is contributed by E87. Positions 114 and 116 each coordinate Mn(2+). E116 is an active-site residue.

It belongs to the IPP isomerase type 1 family. In terms of assembly, homodimer. Mg(2+) is required as a cofactor. It depends on Mn(2+) as a cofactor.

The protein localises to the cytoplasm. It catalyses the reaction isopentenyl diphosphate = dimethylallyl diphosphate. It functions in the pathway isoprenoid biosynthesis; dimethylallyl diphosphate biosynthesis; dimethylallyl diphosphate from isopentenyl diphosphate: step 1/1. Its function is as follows. Catalyzes the 1,3-allylic rearrangement of the homoallylic substrate isopentenyl (IPP) to its highly electrophilic allylic isomer, dimethylallyl diphosphate (DMAPP). This Escherichia coli O127:H6 (strain E2348/69 / EPEC) protein is Isopentenyl-diphosphate Delta-isomerase.